The primary structure comprises 137 residues: Acidic phospholipase A2 VP8 (137 aa).

An N-terminal signal peptide occupies residues Met-1–Gly-16. 7 cysteine pairs are disulfide-bonded: Cys-41-Cys-130, Cys-43-Cys-59, Cys-58-Cys-110, Cys-64-Cys-137, Cys-65-Cys-103, Cys-72-Cys-96, and Cys-90-Cys-101. 3 residues coordinate Ca(2+): Tyr-42, Gly-44, and Gly-46. His-62 is an active-site residue. A Ca(2+)-binding site is contributed by Asp-63. The active site involves Asp-104.

It belongs to the phospholipase A2 family. Group II subfamily. D49 sub-subfamily. In terms of assembly, does not form a complex. Ca(2+) serves as cofactor. Expressed by the venom gland.

Its subcellular location is the secreted. It carries out the reaction a 1,2-diacyl-sn-glycero-3-phosphocholine + H2O = a 1-acyl-sn-glycero-3-phosphocholine + a fatty acid + H(+). Snake venom phospholipase A2 (PLA2) that is not toxic by itself, but the synergistical mixture of a basic and this acidic protein is lethal. PLA2 catalyzes the calcium-dependent hydrolysis of the 2-acyl groups in 3-sn-phosphoglycerides. This Daboia palaestinae (Palestine viper) protein is Acidic phospholipase A2 VP8.